The primary structure comprises 352 residues: Probable cytosolic iron-sulfur protein assembly protein CIAO1 homolog (352 aa).

7 WD repeats span residues 12-51 (ASNKRLWSLSWNHKGSVLISSGEDRVIKLWAKCNDQLWGS), 58-97 (AHKKSIRCVTWSPCGTYIASASFDGTVTIWKISEAHSAPE), 106-145 (GHTSEVKCVAWCPSGHLIATCGRDKSVWLWEFDDEEDVQC), 151-190 (PHSQDVKSVAWHPHGEVLVSTSYDNKINVYREELDDWTVF), 195-234 (GHDSTVWKAEFSPSGDILASCSDDLCVKLWSWEGVCGKSS), 245-284 (YHTRTIFDLNWSPDSQLLASCGSDNRLCIYKMPANGLTHI), and 303-352 (AHSE…EYEL).

Belongs to the WD repeat CIA1 family.

Essential component of the cytosolic iron-sulfur (Fe/S) protein assembly machinery. Required for the maturation of extramitochondrial Fe/S proteins. The protein is Probable cytosolic iron-sulfur protein assembly protein CIAO1 homolog of Schistosoma japonicum (Blood fluke).